A 528-amino-acid polypeptide reads, in one-letter code: Phosphoenolpyruvate carboxykinase (ATP) (528 aa).

The substrate site is built by Arg-56, Tyr-192, and Lys-198. ATP is bound by residues Lys-198, His-217, and 233-241 (GLSGTGKTT). 2 residues coordinate Mn(2+): Lys-198 and His-217. Asp-254 serves as a coordination point for Mn(2+). ATP is bound by residues Glu-282, Arg-319, and Thr-444. Arg-319 provides a ligand contact to substrate.

Belongs to the phosphoenolpyruvate carboxykinase (ATP) family. It depends on Mn(2+) as a cofactor.

It is found in the cytoplasm. The catalysed reaction is oxaloacetate + ATP = phosphoenolpyruvate + ADP + CO2. Its pathway is carbohydrate biosynthesis; gluconeogenesis. Involved in the gluconeogenesis. Catalyzes the conversion of oxaloacetate (OAA) to phosphoenolpyruvate (PEP) through direct phosphoryl transfer between the nucleoside triphosphate and OAA. The chain is Phosphoenolpyruvate carboxykinase (ATP) from Bacillus cytotoxicus (strain DSM 22905 / CIP 110041 / 391-98 / NVH 391-98).